The primary structure comprises 346 residues: Melanoma-associated antigen B4 (346 aa).

Over residues 1 to 18 (MPRGQKSKLRAREKRQRT) the composition is skewed to basic residues. The interval 1–107 (MPRGQKSKLR…STSTERSLKD (107 aa)) is disordered. A compositionally biased stretch (polar residues) spans 45–54 (VLRDTASSSL). Low complexity predominate over residues 92–101 (ASSSQASTST). The 199-residue stretch at 109–307 (LTRKTKMLVQ…NNFPLLYEEA (199 aa)) folds into the MAGE domain. The tract at residues 311–346 (EEERAGARPRVAARRGTTAMTSAYSRATSSSSSQPM) is disordered. Over residues 318-346 (RPRVAARRGTTAMTSAYSRATSSSSSQPM) the composition is skewed to low complexity.

As to expression, expressed in testis.

The protein resides in the cytoplasm. This is Melanoma-associated antigen B4 (MAGEB4) from Homo sapiens (Human).